Consider the following 1014-residue polypeptide: UvrABC system protein A (1014 aa).

32-39 (GLSGSGKS) is a binding site for ATP. ABC transporter domains follow at residues 314–592 (WSHG…AESQ) and 612–941 (QDPS…KFLR). 645 to 652 (GVSGSGKS) is an ATP binding site. The C4-type zinc finger occupies 744 to 770 (CENCAGDGTIKIEMNFLPDVYVPCEVC). Residues 976-995 (TKTVTGTAAKKATATRTAKT) show a composition bias toward low complexity. The tract at residues 976 to 1014 (TKTVTGTAAKKATATRTAKTAVKKAAKPAAKKTTRTSKA) is disordered. Over residues 996–1014 (AVKKAAKPAAKKTTRTSKA) the composition is skewed to basic residues.

Belongs to the ABC transporter superfamily. UvrA family. In terms of assembly, forms a heterotetramer with UvrB during the search for lesions.

The protein resides in the cytoplasm. Its function is as follows. The UvrABC repair system catalyzes the recognition and processing of DNA lesions. UvrA is an ATPase and a DNA-binding protein. A damage recognition complex composed of 2 UvrA and 2 UvrB subunits scans DNA for abnormalities. When the presence of a lesion has been verified by UvrB, the UvrA molecules dissociate. This Streptomyces coelicolor (strain ATCC BAA-471 / A3(2) / M145) protein is UvrABC system protein A.